The chain runs to 416 residues: MSKADIVVGIQWGDEGKGKIVDKLCENYDYVCRSAGGHNAGHTIWVDGIRYALHLMPSGVLNKQCINVIGNGVVVNPDVLISEMAQFENLEGRLFISDRAHLNLNHHALIDQARERLKGDKAIGTTGKGIGPSYEDKISRNGHRVGELLEPEKLCENLMKDFELKKTYFDVLGIAMPSYDEILKDLKRFKEVLAPYITDTTRMLWKALDEDKKVLLEGAQGSMLDIDHGTYPYVTSSTTISAGALSGLGLNPKEIGKVIGIVKAYTTRVGNGAFPSEDLGEDGEKIGLIGKEIGVSTGRKRRCGWFDAVAVRYTARLNGLDTLSLMKLDVLDGFESVKICKAYEYKGQEIDYVPCDLENAKPIYEVMEGWDKVAGIRDYDLLPENAKKYIKRLEELSGVKVGYISTSPEREDTIIL.

Residues 13–19 (GDEGKGK) and 41–43 (GHT) contribute to the GTP site. The active-site Proton acceptor is the D14. Residues D14 and G41 each coordinate Mg(2+). IMP contacts are provided by residues 14 to 17 (DEGK), 39 to 42 (NAGH), T126, R140, Q220, T235, and R299. H42 (proton donor) is an active-site residue. Position 295–301 (295–301 (VSTGRKR)) interacts with substrate. GTP contacts are provided by residues R301, 327–329 (KLD), and 405–407 (STS).

The protein belongs to the adenylosuccinate synthetase family. As to quaternary structure, homodimer. Mg(2+) serves as cofactor.

Its subcellular location is the cytoplasm. It catalyses the reaction IMP + L-aspartate + GTP = N(6)-(1,2-dicarboxyethyl)-AMP + GDP + phosphate + 2 H(+). It participates in purine metabolism; AMP biosynthesis via de novo pathway; AMP from IMP: step 1/2. Its function is as follows. Plays an important role in the de novo pathway of purine nucleotide biosynthesis. Catalyzes the first committed step in the biosynthesis of AMP from IMP. This is Adenylosuccinate synthetase from Campylobacter lari (strain RM2100 / D67 / ATCC BAA-1060).